We begin with the raw amino-acid sequence, 268 residues long: Secreted RxLR effector protein 5 (268 aa).

An N-terminal signal peptide occupies residues 1–21 (MRGAFYMAITLFLARSRSATA). The RxLR-dEER motif lies at 48–63 (RYLRDGLALSAANEER). A glycan (N-linked (GlcNAc...) asparagine) is linked at Asn-104.

This sequence belongs to the RxLR effector family.

It is found in the secreted. The protein localises to the host nucleus. Functionally, effector that acts as a broad suppressor of cell death to interrupt plant immunity. Inhibits cell death induced by cell death-inducing proteins, including the PAMP elicitor INF1 from P.infestans. In Plasmopara viticola (Downy mildew of grapevine), this protein is Secreted RxLR effector protein 5.